A 229-amino-acid polypeptide reads, in one-letter code: 2-phytyl-1,4-naphtoquinone methyltransferase (229 aa).

The protein belongs to the class I-like SAM-binding methyltransferase superfamily. MenG/UbiE family.

It catalyses the reaction demethylphylloquinol + S-adenosyl-L-methionine = phylloquinol + S-adenosyl-L-homocysteine + H(+). The protein operates within cofactor biosynthesis; phylloquinone biosynthesis. In terms of biological role, methyltransferase required for the conversion of 2-phytyl-1,4-beta-naphthoquinol to phylloquinol. The sequence is that of 2-phytyl-1,4-naphtoquinone methyltransferase from Trichormus variabilis (strain ATCC 29413 / PCC 7937) (Anabaena variabilis).